The primary structure comprises 236 residues: C-&gt;U-editing enzyme APOBEC-1 (236 aa).

The CMP/dCMP-type deaminase domain maps to 10-134 (GDPTLRRRIE…QQNRQGLRDL (125 aa)). H61 provides a ligand contact to Zn(2+). E63 (proton donor) is an active-site residue. Zn(2+)-binding residues include C93 and C96.

This sequence belongs to the cytidine and deoxycytidylate deaminase family. Homodimer. Interacts with A1CF; form an mRNA editing complex. Interacts with RBM47; form an mRNA editing complex. Found in a complex with CELF2/CUGBP2 and A1CF. Interacts with HNRPAB. Interacts with SYNCRIP. Zn(2+) serves as cofactor. Expressed exclusively in the small intestine.

It is found in the cytoplasm. It localises to the nucleus. The enzyme catalyses a cytidine in mRNA + H2O + H(+) = a uridine in mRNA + NH4(+). It catalyses the reaction cytidine(6666) in apoB mRNA + H2O + H(+) = uridine(6666) in apoB mRNA + NH4(+). Functionally, cytidine deaminase catalyzing the cytidine to uridine postranscriptional editing of a variety of mRNAs. Form complexes with cofactors that confer differential editing activity and selectivity. Responsible for the postranscriptional editing of a CAA codon for Gln to a UAA codon for stop in the apolipoprotein B mRNA. Also involved in CGA (Arg) to UGA (Stop) editing in the NF1 mRNA. May also play a role in the epigenetic regulation of gene expression by participating in DNA demethylation. This chain is C-&gt;U-editing enzyme APOBEC-1, found in Homo sapiens (Human).